The sequence spans 513 residues: Cytochrome P450 71D445 (513 aa).

Residues 12-28 (SEWAITSTITLLFLILL) traverse the membrane as a helical; Signal-anchor for type II membrane protein segment. Cysteine 450 serves as a coordination point for heme.

It belongs to the cytochrome P450 family. It depends on heme as a cofactor. As to expression, expressed in mature seeds.

The protein resides in the membrane. It catalyses the reaction (-)-casbene + reduced [NADPH--hemoprotein reductase] + O2 = 8-hydroxycasbene + oxidized [NADPH--hemoprotein reductase] + H2O + H(+). The catalysed reaction is 4-hydroxycasbene + reduced [NADPH--hemoprotein reductase] + O2 = 4,8-dihydroxycasbene + oxidized [NADPH--hemoprotein reductase] + H2O + H(+). The enzyme catalyses 4,8-dihydroxycasbene + reduced [NADPH--hemoprotein reductase] + O2 = 4,5,8-trihydroxycasbene + oxidized [NADPH--hemoprotein reductase] + H2O + H(+). The protein operates within secondary metabolite biosynthesis; terpenoid biosynthesis. Its function is as follows. Involved in the biosynthesis of macrocyclic lathyrane type diterpenoids (also called Euphorbia factors) natural products, including the cyclization route from casbene to jolkinol C, a precursor for ingenol mebutate that is used to treat actinic keratosis, a precancerous skin condition. Catalyzes the hydroxylation of (-)-casbene and 4-hydroxycasbene to produce 8-hydroxycasbene and 4,8-dihydroxycasbene, respectively. Also mediates the formation of 4-hydroxy-8-ketocasbene from 4,8-dihydroxycasbene. Together with ADH1, triggers the biosynthesis of 8-ketocasbene from 8-hydroxycasbene. The sequence is that of Cytochrome P450 71D445 from Euphorbia lathyris (Caper spurge).